The sequence spans 332 residues: Ketol-acid reductoisomerase (NADP(+)) (332 aa).

Residues 1 to 182 (MAVIYYDKDC…GSNRAGILET (182 aa)) enclose the KARI N-terminal Rossmann domain. NADP(+)-binding positions include 25 to 28 (YGAQ) and 83 to 86 (DTSQ). H108 is an active-site residue. G134 lines the NADP(+) pocket. In terms of domain architecture, KARI C-terminal knotted spans 183–328 (TFAEETETDL…AELRSMMSWL (146 aa)). Residues D191, E195, E227, and E231 each contribute to the Mg(2+) site. S252 is a binding site for substrate.

The protein belongs to the ketol-acid reductoisomerase family. The cofactor is Mg(2+).

It catalyses the reaction (2R)-2,3-dihydroxy-3-methylbutanoate + NADP(+) = (2S)-2-acetolactate + NADPH + H(+). The catalysed reaction is (2R,3R)-2,3-dihydroxy-3-methylpentanoate + NADP(+) = (S)-2-ethyl-2-hydroxy-3-oxobutanoate + NADPH + H(+). The protein operates within amino-acid biosynthesis; L-isoleucine biosynthesis; L-isoleucine from 2-oxobutanoate: step 2/4. It functions in the pathway amino-acid biosynthesis; L-valine biosynthesis; L-valine from pyruvate: step 2/4. In terms of biological role, involved in the biosynthesis of branched-chain amino acids (BCAA). Catalyzes an alkyl-migration followed by a ketol-acid reduction of (S)-2-acetolactate (S2AL) to yield (R)-2,3-dihydroxy-isovalerate. In the isomerase reaction, S2AL is rearranged via a Mg-dependent methyl migration to produce 3-hydroxy-3-methyl-2-ketobutyrate (HMKB). In the reductase reaction, this 2-ketoacid undergoes a metal-dependent reduction by NADPH to yield (R)-2,3-dihydroxy-isovalerate. In Dehalococcoides mccartyi (strain CBDB1), this protein is Ketol-acid reductoisomerase (NADP(+)).